Consider the following 364-residue polypeptide: Lipoyl synthase, mitochondrial (364 aa).

[4Fe-4S] cluster-binding residues include cysteine 99, cysteine 104, cysteine 110, cysteine 130, cysteine 134, cysteine 137, and serine 345. The Radical SAM core domain occupies 116–334; that stretch reads HSTQTATIML…EQRGNELGFL (219 aa).

This sequence belongs to the radical SAM superfamily. Lipoyl synthase family. Requires [4Fe-4S] cluster as cofactor.

Its subcellular location is the mitochondrion. It carries out the reaction [[Fe-S] cluster scaffold protein carrying a second [4Fe-4S](2+) cluster] + N(6)-octanoyl-L-lysyl-[protein] + 2 oxidized [2Fe-2S]-[ferredoxin] + 2 S-adenosyl-L-methionine + 4 H(+) = [[Fe-S] cluster scaffold protein] + N(6)-[(R)-dihydrolipoyl]-L-lysyl-[protein] + 4 Fe(3+) + 2 hydrogen sulfide + 2 5'-deoxyadenosine + 2 L-methionine + 2 reduced [2Fe-2S]-[ferredoxin]. The protein operates within protein modification; protein lipoylation via endogenous pathway; protein N(6)-(lipoyl)lysine from octanoyl-[acyl-carrier-protein]: step 2/2. Its function is as follows. Catalyzes the radical-mediated insertion of two sulfur atoms into the C-6 and C-8 positions of the octanoyl moiety bound to the lipoyl domains of lipoate-dependent enzymes, thereby converting the octanoylated domains into lipoylated derivatives. The protein is Lipoyl synthase, mitochondrial of Drosophila mojavensis (Fruit fly).